A 730-amino-acid polypeptide reads, in one-letter code: Catalase-peroxidase 1 (730 aa).

Positions 1–24 (MQEKGKCPVTGMTKHKTSGGTTNQ) are disordered. Positions 95–218 (WHSAGTYRMG…LAAVQMGLIY (124 aa)) form a cross-link, tryptophyl-tyrosyl-methioninium (Trp-Tyr) (with M-244). H96 functions as the Proton acceptor in the catalytic mechanism. The segment at residues 218 to 244 (YVNPEGPNGQPSALASGKDIRDTFARM) is a cross-link (tryptophyl-tyrosyl-methioninium (Tyr-Met) (with W-95)). A heme b-binding site is contributed by H259.

Belongs to the peroxidase family. Peroxidase/catalase subfamily. As to quaternary structure, homodimer or homotetramer. The cofactor is heme b. Post-translationally, formation of the three residue Trp-Tyr-Met cross-link is important for the catalase, but not the peroxidase activity of the enzyme.

It carries out the reaction H2O2 + AH2 = A + 2 H2O. The catalysed reaction is 2 H2O2 = O2 + 2 H2O. Functionally, bifunctional enzyme with both catalase and broad-spectrum peroxidase activity. The protein is Catalase-peroxidase 1 of Alkaliphilus metalliredigens (strain QYMF).